A 307-amino-acid chain; its full sequence is Probable GTP 3',8-cyclase (307 aa).

In terms of domain architecture, Radical SAM core spans 5 to 231 (RFGRPVTNLR…MHRRKKYFIP (227 aa)). R14 contacts GTP. 3 residues coordinate [4Fe-4S] cluster: C21, C25, and C28. K62 is a GTP binding site. G66 lines the S-adenosyl-L-methionine pocket. T91 contacts GTP. An S-adenosyl-L-methionine-binding site is contributed by S115. K151 contacts GTP. M190 contributes to the S-adenosyl-L-methionine binding site. Positions 251 and 254 each coordinate [4Fe-4S] cluster. 256 to 258 (RLR) contributes to the GTP binding site. C268 is a binding site for [4Fe-4S] cluster.

It belongs to the radical SAM superfamily. MoaA family. [4Fe-4S] cluster is required as a cofactor.

It carries out the reaction GTP + AH2 + S-adenosyl-L-methionine = (8S)-3',8-cyclo-7,8-dihydroguanosine 5'-triphosphate + 5'-deoxyadenosine + L-methionine + A + H(+). The protein operates within cofactor biosynthesis; molybdopterin biosynthesis. Functionally, catalyzes the cyclization of GTP to (8S)-3',8-cyclo-7,8-dihydroguanosine 5'-triphosphate. This is Probable GTP 3',8-cyclase from Thermococcus kodakarensis (strain ATCC BAA-918 / JCM 12380 / KOD1) (Pyrococcus kodakaraensis (strain KOD1)).